Reading from the N-terminus, the 391-residue chain is DNA primase small subunit PriS (391 aa).

Catalysis depends on residues Asp-98, Asp-100, and Asp-294.

This sequence belongs to the eukaryotic-type primase small subunit family. In terms of assembly, heterodimer of a small subunit (PriS) and a large subunit (PriL). Mg(2+) is required as a cofactor. It depends on Mn(2+) as a cofactor.

Functionally, catalytic subunit of DNA primase, an RNA polymerase that catalyzes the synthesis of short RNA molecules used as primers for DNA polymerase during DNA replication. The small subunit contains the primase catalytic core and has DNA synthesis activity on its own. Binding to the large subunit stabilizes and modulates the activity, increasing the rate of DNA synthesis while decreasing the length of the DNA fragments, and conferring RNA synthesis capability. The DNA polymerase activity may enable DNA primase to also catalyze primer extension after primer synthesis. May also play a role in DNA repair. This Halobacterium salinarum (strain ATCC 29341 / DSM 671 / R1) protein is DNA primase small subunit PriS.